Consider the following 260-residue polypeptide: MGGILRLTLIPCLYINGDGGMSYQRVLLKLSGEALMGDLGYGIDPAVVGTIAQEIKDVLQAGVQLAIVVGGGNIFRGVKASAAGMDRATADYIGMIATVMNAMTLQDALEQMDIPTRVLTAIAMQEVAEPYIRRRAIRHLEKGRVVIFGAGSGNPFFTTDTTAALRAAEIDAEVVFKATKVDGVYDSDPKTNPNARRFTTLTYSHVLAEDLKVMDSTAIALCKDNNIPIMIFDLGVPGNIVRAIKGEAVGTLVGENCEVS.

ATP is bound at residue 29–32 (KLSG). An involved in allosteric activation by GTP region spans residues 37–42 (GDLGYG). A UMP-binding site is contributed by G71. Residues G72 and R76 each contribute to the ATP site. Residues D91 and 152–159 (SGNPFFTT) each bind UMP. T179, Y185, and D188 together coordinate ATP.

The protein belongs to the UMP kinase family. In terms of assembly, homohexamer.

The protein resides in the cytoplasm. The enzyme catalyses UMP + ATP = UDP + ADP. The protein operates within pyrimidine metabolism; CTP biosynthesis via de novo pathway; UDP from UMP (UMPK route): step 1/1. Allosterically activated by GTP. Inhibited by UTP. Catalyzes the reversible phosphorylation of UMP to UDP. The protein is Uridylate kinase of Synechocystis sp. (strain ATCC 27184 / PCC 6803 / Kazusa).